The sequence spans 1036 residues: Hexagonally packed intermediate-layer surface protein (1036 aa).

A signal peptide spans 1–17; sequence MKKNIALMALTGVLTLA. Cystine bridges form between cysteine 74–cysteine 86, cysteine 256–cysteine 275, and cysteine 642–cysteine 754.

Post-translationally, glycosylated; contains six glycans. In terms of processing, acylated in the N-terminal region. The N-terminus is blocked.

The protein localises to the secreted. It is found in the cell wall. It localises to the S-layer. Functionally, shape maintenance, possible protection from noxious enzymes or exogenous and unsettling DNA, and may mediate homotypic cell-cell contacts. This Deinococcus radiodurans protein is Hexagonally packed intermediate-layer surface protein (hpi).